Consider the following 390-residue polypeptide: NADH-quinone oxidoreductase subunit D (390 aa).

The protein belongs to the complex I 49 kDa subunit family. As to quaternary structure, NDH-1 is composed of 14 different subunits. Subunits NuoB, C, D, E, F, and G constitute the peripheral sector of the complex.

The protein resides in the cell membrane. The catalysed reaction is a quinone + NADH + 5 H(+)(in) = a quinol + NAD(+) + 4 H(+)(out). Functionally, NDH-1 shuttles electrons from NADH, via FMN and iron-sulfur (Fe-S) centers, to quinones in the respiratory chain. The immediate electron acceptor for the enzyme in this species is believed to be ubiquinone. Couples the redox reaction to proton translocation (for every two electrons transferred, four hydrogen ions are translocated across the cytoplasmic membrane), and thus conserves the redox energy in a proton gradient. The chain is NADH-quinone oxidoreductase subunit D from Wolbachia pipientis wMel.